The following is a 34-amino-acid chain: Hemopexin (34 aa).

Residues 1-25 (RPLTQHKPHTPGDEHPHGAEPPGXD) form a disordered region.

This sequence belongs to the hemopexin family. As to expression, expressed by the liver and secreted in plasma.

The protein localises to the secreted. Its function is as follows. Binds heme and transports it to the liver for breakdown and iron recovery, after which the free hemopexin returns to the circulation. The protein is Hemopexin (HPX) of Gallus gallus (Chicken).